We begin with the raw amino-acid sequence, 266 residues long: MSGTGRQFRVARAVISPQHPGMIRDKEKPAPTKPGKGVIAVAPPSFRRERALLKRGVWPVAGCDEAGRGPLAGPVVAAAVVLDPKRIPKGLDDSKRLTADKREQLFEQICATAAFAVAYASPARIDRDNILRASLWALAKAVHALPEMPRHVFVDGRDKIATSCDCDAVIGGDGLVLSIAAASIIAKVSRDRLMCRLAEDCPGYGFENHKGYGVPEHLAALDRLGPSKHHRRLFAPVVAARQKHQPETATVPAVAADLFEFGAPPV.

The interval 19 to 38 is disordered; sequence HPGMIRDKEKPAPTKPGKGV. In terms of domain architecture, RNase H type-2 spans 58 to 246; it reads WPVAGCDEAG…VVAARQKHQP (189 aa). A divalent metal cation contacts are provided by D64, E65, and D155.

This sequence belongs to the RNase HII family. Mn(2+) is required as a cofactor. It depends on Mg(2+) as a cofactor.

The protein localises to the cytoplasm. It carries out the reaction Endonucleolytic cleavage to 5'-phosphomonoester.. Endonuclease that specifically degrades the RNA of RNA-DNA hybrids. This is Ribonuclease HII from Rhodopseudomonas palustris (strain BisB18).